The primary structure comprises 286 residues: Ribosomal RNA small subunit methyltransferase A (286 aa).

Residues asparagine 28, leucine 30, glycine 55, glutamate 77, aspartate 103, and asparagine 123 each coordinate S-adenosyl-L-methionine.

The protein belongs to the class I-like SAM-binding methyltransferase superfamily. rRNA adenine N(6)-methyltransferase family. RsmA subfamily.

The protein resides in the cytoplasm. It carries out the reaction adenosine(1518)/adenosine(1519) in 16S rRNA + 4 S-adenosyl-L-methionine = N(6)-dimethyladenosine(1518)/N(6)-dimethyladenosine(1519) in 16S rRNA + 4 S-adenosyl-L-homocysteine + 4 H(+). Specifically dimethylates two adjacent adenosines (A1518 and A1519) in the loop of a conserved hairpin near the 3'-end of 16S rRNA in the 30S particle. May play a critical role in biogenesis of 30S subunits. The protein is Ribosomal RNA small subunit methyltransferase A of Rhodopseudomonas palustris (strain BisB18).